Consider the following 638-residue polypeptide: Exocyst complex component EXO70A1 (638 aa).

A disordered region spans residues 163–190 (FDGLPNSLRPSSDGDGGGKPHGGHHNDD).

This sequence belongs to the EXO70 family. The exocyst complex is composed of SEC3, SEC5, SEC6, SEC8, SEC10, EXO70A1 and EXO84B. Interacts with SEC3A and EXO84B. Co-localizes with FPP3/VETH1, FPP2/VETH2 and COG2 in vesicle-like small motile compartments. May interact with COG2.

It is found in the cytoplasm. The protein localises to the cytosol. It localises to the cytoskeleton. Its subcellular location is the phragmoplast. The protein resides in the cell membrane. It is found in the secreted. The protein localises to the cell wall. In terms of biological role, component of the exocyst complex involved in the docking of exocytic vesicles with fusion sites on the plasma membrane during regulated or polarized secretion. Involved in polarized cell growth and organ morphogenesis. Involved in polarized cell growth and organ morphogenesis. During cytokinesis, involved in cell plate initiation, cell plate maturation and formation of new primary cell wall. Participates in polarized pectin delivery required for the polarized development of the mucilage-producing volcano cells of the seed coat. Involved in the recycling and localization of auxin efflux carriers PIN1 and PIN2, and thus in polar auxin transport regulation. Functions in vesicle trafficking in tracheary elements to regulate patterned secondary cell wall (SCW) thickening. The protein is Exocyst complex component EXO70A1 of Arabidopsis thaliana (Mouse-ear cress).